We begin with the raw amino-acid sequence, 422 residues long: 3-phosphoshikimate 1-carboxyvinyltransferase (422 aa).

Residues lysine 20, serine 21, and arginine 25 each coordinate 3-phosphoshikimate. Position 20 (lysine 20) interacts with phosphoenolpyruvate. Phosphoenolpyruvate is bound by residues glycine 90 and arginine 118. The 3-phosphoshikimate site is built by serine 163, serine 164, glutamine 165, serine 191, aspartate 306, and lysine 333. Glutamine 165 contacts phosphoenolpyruvate. The Proton acceptor role is filled by aspartate 306. 2 residues coordinate phosphoenolpyruvate: arginine 337 and arginine 378.

Belongs to the EPSP synthase family. Monomer.

The protein localises to the cytoplasm. The catalysed reaction is 3-phosphoshikimate + phosphoenolpyruvate = 5-O-(1-carboxyvinyl)-3-phosphoshikimate + phosphate. The protein operates within metabolic intermediate biosynthesis; chorismate biosynthesis. Catalyzes the transfer of the enolpyruvyl moiety of phosphoenolpyruvate (PEP) to the 5-hydroxyl of shikimate-3-phosphate (S3P) to produce enolpyruvyl shikimate-3-phosphate and inorganic phosphate. The chain is 3-phosphoshikimate 1-carboxyvinyltransferase from Methanocella arvoryzae (strain DSM 22066 / NBRC 105507 / MRE50).